The sequence spans 424 residues: Deoxyguanosinetriphosphate triphosphohydrolase-like protein (424 aa).

The disordered stretch occupies residues 1–24; the sequence is MYPYSDADAFRRHPERAKSSQLRT. A compositionally biased stretch (basic and acidic residues) spans 8–18; it reads DAFRRHPERAK. Positions 67-217 constitute an HD domain; that stretch reads RLTHSLEVAQ…MDFSDDIAYS (151 aa).

Belongs to the dGTPase family. Type 2 subfamily.

The protein is Deoxyguanosinetriphosphate triphosphohydrolase-like protein of Corynebacterium glutamicum (strain R).